Consider the following 1902-residue polypeptide: PI-type proteinase (1902 aa).

Positions 1–33 (MQRKKKGLSILLAGTVALGALAVLPVGEIQAKA) are cleaved as a signal peptide. A propeptide spanning residues 34-187 (AISQQTKGSS…VTLAKVYYPT (154 aa)) is cleaved from the precursor. The Peptidase S8 domain maps to 191–697 (ANSMANVQAV…AGLVDVKAAI (507 aa)). Residues Asp-217, His-281, and Ser-620 each act as charge relay system in the active site. Residues 1796 to 1874 (GKGDGTTGTS…GALPKTGETT (79 aa)) are disordered. Gly residues predominate over residues 1797-1812 (KGDGTTGTSDKGGGQG). Residues 1830–1843 (SQPSSGGNIPTNPA) show a composition bias toward polar residues. Positions 1867-1871 (LPKTG) match the LPXTG sorting signal motif. Position 1870 is a pentaglycyl murein peptidoglycan amidated threonine (Thr-1870). Residues 1871–1902 (GETTERPAFGFLGVIVVILMGVLGLKRKQREE) constitute a propeptide, removed by sortase.

Belongs to the peptidase S8 family.

The protein localises to the secreted. It localises to the cell wall. The enzyme catalyses Endopeptidase activity with very broad specificity, although some subsite preference have been noted, e.g. large hydrophobic residues in the P1 and P4 positions, and Pro in the P2 position. Best known for its action on caseins, although it has been shown to hydrolyze hemoglobin and oxidized insulin B-chain.. Its function is as follows. Protease which breaks down milk proteins during the growth of the bacteria on milk. The sequence is that of PI-type proteinase (prtP) from Lactococcus lactis subsp. cremoris (Streptococcus cremoris).